Consider the following 249-residue polypeptide: 3-deoxy-D-manno-octulosonic acid kinase (249 aa).

Residue aspartate 175 is part of the active site.

It belongs to the protein kinase superfamily. KdkA/RfaP family.

It localises to the cell inner membrane. It carries out the reaction an alpha-Kdo-(2-&gt;6)-lipid IVA + ATP = a 4-O-phospho-alpha-Kdo-(2-&gt;6)-lipid IVA + ADP + H(+). It participates in bacterial outer membrane biogenesis; LPS core biosynthesis. In terms of biological role, catalyzes the ATP-dependent phosphorylation of the 3-deoxy-D-manno-octulosonic acid (Kdo) residue in Kdo-lipid IV(A) at the 4-OH position. The sequence is that of 3-deoxy-D-manno-octulosonic acid kinase from Xylella fastidiosa (strain M23).